The sequence spans 412 residues: MAFLCQRDSYAREFTTTVVSCCPAELQTDGNGSKKEVLSGFQVVLEDTLLFPEGGGQPDDRGTINDISVLRVTRRGAQADHFTQTPLSPGSQVQVRVDWERRFDHMQQHSGQHLITAVADLLFGLKTTSWELGKLRCVIELDSPSVTAEQVAAIEQSVNQKIRDRLPVSVRELSLDDPEVEQVRGRGLPDDHAGPIRVVTIEGVDSNMCCGTHVNNLSDLQVIKILGTEKGKKNKSNLIFLAGNRVLKWMERSHGSEKALTSLLKCGAEDHVEAVKKLQNATKLLQKNNLNLLRDLAVHTAHTLRSSPAWGGVVTLHRKEGDSEFMNIIANEIGSEETLLFLTVGDEKGAGLFLLAGPTEAVETLGPRVAEVLEGKGAGKKGRFQGKATKMSRRAEVQALLQDYVSTQSAEE.

Residues His109 and His113 each coordinate Zn(2+). Ser174 is modified (phosphoserine). Residues Cys209 and His213 each coordinate Zn(2+).

The protein belongs to the class-II aminoacyl-tRNA synthetase family. Alax-L subfamily. Zn(2+) serves as cofactor.

The protein localises to the cytoplasm. Its function is as follows. Functions in trans to edit the amino acid moiety from incorrectly charged tRNA(Ala). The chain is Alanyl-tRNA editing protein Aarsd1 (Aarsd1) from Rattus norvegicus (Rat).